The primary structure comprises 335 residues: Anthranilate phosphoribosyltransferase 2 (335 aa).

5-phospho-alpha-D-ribose 1-diphosphate-binding positions include Gly-70, 73-74 (GD), Thr-78, 80-83 (NIST), 98-106 (KHGNRSASS), and Ser-110. Position 70 (Gly-70) interacts with anthranilate. Mg(2+) is bound at residue Ser-82. Anthranilate is bound at residue Asn-101. Anthranilate is bound at residue Arg-156. Residues Asp-215 and Glu-216 each contribute to the Mg(2+) site.

Belongs to the anthranilate phosphoribosyltransferase family. In terms of assembly, homodimer. Mg(2+) is required as a cofactor.

It carries out the reaction N-(5-phospho-beta-D-ribosyl)anthranilate + diphosphate = 5-phospho-alpha-D-ribose 1-diphosphate + anthranilate. It participates in amino-acid biosynthesis; L-tryptophan biosynthesis; L-tryptophan from chorismate: step 2/5. In terms of biological role, catalyzes the transfer of the phosphoribosyl group of 5-phosphorylribose-1-pyrophosphate (PRPP) to anthranilate to yield N-(5'-phosphoribosyl)-anthranilate (PRA). The chain is Anthranilate phosphoribosyltransferase 2 from Streptomyces coelicolor (strain ATCC BAA-471 / A3(2) / M145).